The following is a 907-amino-acid chain: Putative pentatricopeptide repeat-containing protein At5g59900 (907 aa).

PPR repeat units lie at residues Ser-103–Pro-137, Ser-155–Lys-185, Glu-191–Pro-225, Asp-226–Val-260, Asn-261–Pro-295, Asp-296–Pro-330, Ser-331–Pro-365, Asn-366–Pro-400, Asn-401–Leu-435, Ser-436–Pro-470, Thr-471–Pro-505, Ser-506–Pro-540, Asn-541–Pro-575, Asp-576–Leu-610, Asn-611–Leu-645, Asp-646–Pro-680, Asp-681–Pro-715, Asn-716–Pro-750, Asn-751–Gly-782, Asn-786–Pro-820, Asp-821–Pro-855, and Asp-856–Pro-890. The interval Gly-887–Ser-907 is disordered. Residues Asn-891–Ser-907 show a composition bias toward low complexity.

It belongs to the PPR family. P subfamily.

The polypeptide is Putative pentatricopeptide repeat-containing protein At5g59900 (Arabidopsis thaliana (Mouse-ear cress)).